The chain runs to 170 residues: 3-hydroxydecanoyl-[acyl-carrier-protein] dehydratase (170 aa).

His69 is a catalytic residue.

The protein belongs to the thioester dehydratase family. FabA subfamily. Homodimer.

Its subcellular location is the cytoplasm. The catalysed reaction is a (3R)-hydroxyacyl-[ACP] = a (2E)-enoyl-[ACP] + H2O. It carries out the reaction (3R)-hydroxydecanoyl-[ACP] = (2E)-decenoyl-[ACP] + H2O. The enzyme catalyses (2E)-decenoyl-[ACP] = (3Z)-decenoyl-[ACP]. It functions in the pathway lipid metabolism; fatty acid biosynthesis. Necessary for the introduction of cis unsaturation into fatty acids. Catalyzes the dehydration of (3R)-3-hydroxydecanoyl-ACP to E-(2)-decenoyl-ACP and then its isomerization to Z-(3)-decenoyl-ACP. Can catalyze the dehydratase reaction for beta-hydroxyacyl-ACPs with saturated chain lengths up to 16:0, being most active on intermediate chain length. The protein is 3-hydroxydecanoyl-[acyl-carrier-protein] dehydratase of Idiomarina loihiensis (strain ATCC BAA-735 / DSM 15497 / L2-TR).